Here is a 395-residue protein sequence, read N- to C-terminus: Octopamine receptor beta-2R (395 aa).

The Extracellular portion of the chain corresponds to 1-42; the sequence is MDPINGSHSGANATISDITNGAYNATDAGEWTSSVMFKLRTC. Residues Asn5, Asn12, and Asn24 are each glycosylated (N-linked (GlcNAc...) asparagine). Residues 43–63 form a helical membrane-spanning segment; it reads VLLLIVIMAVLGNMLVIVSVM. The Cytoplasmic portion of the chain corresponds to 64 to 74; that stretch reads RHRKLRVITNY. The helical transmembrane segment at 75 to 95 threads the bilayer; the sequence is FVVSLAFADILVAMVVMPFNF. The Extracellular portion of the chain corresponds to 96–117; the sequence is SVQFNQGWVFGETICDLWNSSD. The N-linked (GlcNAc...) asparagine glycan is linked to Asn114. Residues 118-140 traverse the membrane as a helical segment; it reads VYFTSTSILHLCCISVDRYYAIV. Residues 141-154 lie on the Cytoplasmic side of the membrane; it reads KPLKYPIKMTKKMA. Residues 155–175 form a helical membrane-spanning segment; sequence FVMLAATWLSPITISYVPIFM. Over 176–202 the chain is Extracellular; the sequence is GWYTTTDFLESRRDDQCEFKVNKPYAV. The chain crosses the membrane as a helical span at residues 203–223; that stretch reads ISSSISFWIPCTIMIFTYLAI. Residues 224 to 282 are Cytoplasmic-facing; that stretch reads FKEANRQEKALHARAGNAMLMHRHSREVSDKNGALHINATTPTKDRNLLKMKREHKAAR. The helical transmembrane segment at 283–303 threads the bilayer; it reads TLGIIMGAFILCWLPFFLYYV. Over 304 to 315 the chain is Extracellular; that stretch reads STSLCDSCNCPE. The chain crosses the membrane as a helical span at residues 316–336; that stretch reads VVTVIMFWTGYFNSALNPIIY. Residues 337 to 395 are Cytoplasmic-facing; it reads AYFNRDFRNAFKNTLACAFCSFCKRSASDLDAMERLDRRGSAQLRVPIPSRRASDLASL.

It belongs to the G-protein coupled receptor 1 family.

It localises to the cell membrane. Its function is as follows. Autoreceptor for octopamine, which is a neurotransmitter, neurohormone, and neuromodulator in invertebrates. Also acts as a receptor for tyramine, but with much less potency. The activity of this receptor is mediated by G proteins which activate adenylyl cyclase. This chain is Octopamine receptor beta-2R, found in Chilo suppressalis (Asiatic rice borer moth).